The sequence spans 375 residues: tRNA-specific 2-thiouridylase MnmA (375 aa).

ATP-binding positions include 16–23 and methionine 42; that span reads GMSGGVDS. Positions 102–104 are interaction with target base in tRNA; sequence NPD. Cysteine 107 serves as the catalytic Nucleophile. Cysteine 107 and cysteine 203 are joined by a disulfide. Glycine 131 is an ATP binding site. Positions 153-155 are interaction with tRNA; the sequence is KDQ. The active-site Cysteine persulfide intermediate is the cysteine 203. An interaction with tRNA region spans residues 315-316; the sequence is RY.

Belongs to the MnmA/TRMU family.

It is found in the cytoplasm. The enzyme catalyses S-sulfanyl-L-cysteinyl-[protein] + uridine(34) in tRNA + AH2 + ATP = 2-thiouridine(34) in tRNA + L-cysteinyl-[protein] + A + AMP + diphosphate + H(+). Functionally, catalyzes the 2-thiolation of uridine at the wobble position (U34) of tRNA, leading to the formation of s(2)U34. This Pseudomonas paraeruginosa (strain DSM 24068 / PA7) (Pseudomonas aeruginosa (strain PA7)) protein is tRNA-specific 2-thiouridylase MnmA.